We begin with the raw amino-acid sequence, 167 residues long: Ribosome maturation factor RimM (167 aa).

A PRC barrel domain is found at 94-165 (ENEFYYSDII…KIIITPMEGL (72 aa)).

Belongs to the RimM family. Binds ribosomal protein uS19.

It localises to the cytoplasm. An accessory protein needed during the final step in the assembly of 30S ribosomal subunit, possibly for assembly of the head region. Essential for efficient processing of 16S rRNA. May be needed both before and after RbfA during the maturation of 16S rRNA. It has affinity for free ribosomal 30S subunits but not for 70S ribosomes. This Staphylococcus aureus (strain NCTC 8325 / PS 47) protein is Ribosome maturation factor RimM.